A 381-amino-acid polypeptide reads, in one-letter code: MESIGVVAPHTMHFAEPLRLQSGSVLGNYQLVVETYGELNAARSNAVLVCHALNASHHVAGVYADDPRSTGWWDNMVGPGKPLDTNRFFVIGVNNLGSCFGSTGPMSIDPATGTPYGARFPVVTVEDWVHAQARVADAFGIERFAAVMGGSLGGMQALAWSLLYPERVAHCIDIASTPKLSAQNIAFNEVARSAILSDPDFHGGDYYAHGVKPRRGLRVARMIGHITYLSDDDMAEKFGRALRRADGALDAYNFNFDVEFEVESYLRYQGDKFADYFDANTYLLITRALDYFDPAKAFNGDLSAALAHTKAKYLIASFMTDWRFAPARSREIVKALLDNRRSVSYAEIDAPHGHDAFLLDDARYHNLVRAYYERIAEEVGA.

The 316-residue stretch at 45 to 360 (NAVLVCHALN…PHGHDAFLLD (316 aa)) folds into the AB hydrolase-1 domain. Ser151 acts as the Nucleophile in catalysis. Arg221 is a binding site for substrate. Catalysis depends on residues Asp321 and His354. Asp355 contacts substrate.

Belongs to the AB hydrolase superfamily. MetX family. Homodimer.

The protein localises to the cytoplasm. It catalyses the reaction L-homoserine + succinyl-CoA = O-succinyl-L-homoserine + CoA. It functions in the pathway amino-acid biosynthesis; L-methionine biosynthesis via de novo pathway; O-succinyl-L-homoserine from L-homoserine: step 1/1. Functionally, transfers a succinyl group from succinyl-CoA to L-homoserine, forming succinyl-L-homoserine. The sequence is that of Homoserine O-succinyltransferase from Burkholderia mallei (strain NCTC 10247).